The sequence spans 477 residues: Pentatricopeptide repeat-containing protein At1g55630 (477 aa).

PPR repeat units lie at residues 151 to 185 (TANC…GYPT), 186 to 220 (TACT…NYRP), 221 to 255 (YKHS…GFTP), 256 to 290 (DVLT…GFSP), 291 to 325 (DLYT…GVEP), 326 to 360 (GVIH…GCTP), 361 to 395 (DVVC…GQLP), 396 to 430 (NVFT…GCNP), and 431 to 465 (NFVV…GHYV).

The protein belongs to the PPR family. P subfamily.

This is Pentatricopeptide repeat-containing protein At1g55630 from Arabidopsis thaliana (Mouse-ear cress).